The sequence spans 1171 residues: ATP-dependent helicase/deoxyribonuclease subunit B (1171 aa).

The UvrD-like helicase ATP-binding domain occupies 1–343; that stretch reads MSLRFVIGRA…LVAEENYRYR (343 aa). 8–15 provides a ligand contact to ATP; the sequence is GRAGSGKS. The region spanning 281–587 is the UvrD-like helicase C-terminal domain; it reads MEQPRFHSPA…QFANIPPSLD (307 aa). [4Fe-4S] cluster-binding residues include Cys805, Cys1129, Cys1132, and Cys1138.

It belongs to the helicase family. AddB/RexB type 1 subfamily. As to quaternary structure, heterodimer of AddA and AddB. Requires Mg(2+) as cofactor. It depends on [4Fe-4S] cluster as a cofactor.

The heterodimer acts as both an ATP-dependent DNA helicase and an ATP-dependent, dual-direction single-stranded exonuclease. Recognizes the chi site generating a DNA molecule suitable for the initiation of homologous recombination. The AddB subunit has 5' -&gt; 3' nuclease activity but not helicase activity. This Bacillus anthracis protein is ATP-dependent helicase/deoxyribonuclease subunit B.